A 203-amino-acid polypeptide reads, in one-letter code: Molybdenum cofactor guanylyltransferase (203 aa).

GTP is bound by residues 20 to 22 (LAG), Lys33, Asn61, Asp78, and Asp108. Asp108 provides a ligand contact to Mg(2+).

It belongs to the MobA family. As to quaternary structure, monomer. It depends on Mg(2+) as a cofactor.

The protein resides in the cytoplasm. It catalyses the reaction Mo-molybdopterin + GTP + H(+) = Mo-molybdopterin guanine dinucleotide + diphosphate. Transfers a GMP moiety from GTP to Mo-molybdopterin (Mo-MPT) cofactor (Moco or molybdenum cofactor) to form Mo-molybdopterin guanine dinucleotide (Mo-MGD) cofactor. This chain is Molybdenum cofactor guanylyltransferase, found in Vibrio cholerae serotype O1 (strain ATCC 39315 / El Tor Inaba N16961).